The following is a 248-amino-acid chain: E3 ubiquitin-protein ligase BIG BROTHER (248 aa).

The segment at 197-238 (CVICQLKYKIGERQMNLPCKHVYHSECISKWLSINKVCPVCN) adopts an RING-type; atypical zinc-finger fold.

As to quaternary structure, interacts with the E2 ubiquitin conjugating enzyme UBC10 via the RING domain. Interacts with DA1. In terms of processing, auto-ubiquitinated. Mostly expressed in inflorescence, and, to a lower extent, in seedlings, roots, stems, leaves and siliques.

It catalyses the reaction S-ubiquitinyl-[E2 ubiquitin-conjugating enzyme]-L-cysteine + [acceptor protein]-L-lysine = [E2 ubiquitin-conjugating enzyme]-L-cysteine + N(6)-ubiquitinyl-[acceptor protein]-L-lysine.. It functions in the pathway protein modification; protein ubiquitination. Functionally, E3 ubiquitin-protein ligase that limits organ size, and possibly seed size, in a dose-dependent manner. Negatively regulates the duration of cell proliferation in leaves and petals independently of the major phytohormones (e.g. auxin, cytokinin, gibberellin, brassinosteroids, ethylene, abscisic acid, jasmonic acid), probably by targeting growth stimulators for degradation. Limits the proliferation of root meristematic cells. Polyubiquitinates DA1. Involved in the promotion of leaf senescence, in addition to its function in restricting plant growth. Possesses E3 ubiquitin-protein ligase activity in vitro. In Arabidopsis thaliana (Mouse-ear cress), this protein is E3 ubiquitin-protein ligase BIG BROTHER (BB).